The sequence spans 357 residues: MSLSRLLIKDFRNIENADLALSPGFNFLVGANGSGKTSVLEAIYTLGHGRAFRSLQIGRVIRHEQEAFVLHGRLQGEERETSIGLTKDKQGDSKVRIDGTDGHKVAELAHLMPMQLITPEGFTLLNGGPKYRRAFLDWGCFHNEAGFFTAWSNLKRLLKQRNAALRQVSRYEQLRPWDKELIPLAEQISTWRAEYSSAIAQDMADTCQQFLPEFSLTFSFQRGWEKETDYADVLERSFERDRILTYTAHGPHKADFRIRADGAPVEDTLSRGQLKLLMCALRLAQGEFLTRESGRRCLYLIDDFASELDDARRGLLASRLKATQSQVFVSAISAEHVLDMSDKNSKMFSVEKGKITD.

30–37 (GANGSGKT) lines the ATP pocket.

It belongs to the RecF family.

It localises to the cytoplasm. Functionally, the RecF protein is involved in DNA metabolism; it is required for DNA replication and normal SOS inducibility. RecF binds preferentially to single-stranded, linear DNA. It also seems to bind ATP. The protein is DNA replication and repair protein RecF of Salmonella arizonae (strain ATCC BAA-731 / CDC346-86 / RSK2980).